The following is a 319-amino-acid chain: Homoserine O-acetyltransferase (319 aa).

C142 functions as the Acyl-thioester intermediate in the catalytic mechanism. Residues K163 and S192 each contribute to the substrate site. H235 (proton acceptor) is an active-site residue. E237 is an active-site residue. A substrate-binding site is contributed by R249.

The protein belongs to the MetA family.

The protein localises to the cytoplasm. The enzyme catalyses L-homoserine + acetyl-CoA = O-acetyl-L-homoserine + CoA. Its pathway is amino-acid biosynthesis; L-methionine biosynthesis via de novo pathway; O-acetyl-L-homoserine from L-homoserine: step 1/1. Its function is as follows. Transfers an acetyl group from acetyl-CoA to L-homoserine, forming acetyl-L-homoserine. This Lactococcus lactis subsp. cremoris (strain MG1363) protein is Homoserine O-acetyltransferase.